A 171-amino-acid chain; its full sequence is Actin-related protein 2/3 complex subunit 4 (171 aa).

It belongs to the ARPC4 family. In terms of assembly, component of the Arp2/3 complex composed of ARP2, ARP3, ARC40/p41-ARC, ARC35/p34-ARC, ARC18/p21-ARC, ARC19/p20-ARC and ARC16/p16-ARC.

Its subcellular location is the cytoplasm. It is found in the cytoskeleton. The protein localises to the actin patch. Its function is as follows. Functions as actin-binding component of the Arp2/3 complex which is involved in regulation of actin polymerization and together with an activating nucleation-promoting factor (NPF) mediates the formation of branched actin networks. Seems to contact the mother actin filament. The polypeptide is Actin-related protein 2/3 complex subunit 4 (ARC19) (Saccharomyces cerevisiae (strain ATCC 204508 / S288c) (Baker's yeast)).